Here is a 677-residue protein sequence, read N- to C-terminus: mRNA export factor Gle1 (677 aa).

The segment covering 34–48 (EDREPIWVEGSRKTP) has biased composition (basic and acidic residues). Disordered regions lie at residues 34-65 (EDRE…NNEI), 113-136 (KQDA…DQLQ), and 294-366 (ERQR…ATST). Residues 49-60 (EPPLPEESPAPE) are compositionally biased toward pro residues. 2 coiled-coil regions span residues 122 to 179 (ETQQ…QKLH) and 280 to 346 (QQQL…AANV). Basic and acidic residues predominate over residues 294-340 (ERQRQQQQEEERQKLEEQQKLEEQEKLRKEKEESAAKEKQQEAETAK).

This sequence belongs to the GLE1 family. May associate with the NPC.

The protein localises to the cytoplasm. Its subcellular location is the nucleus. The protein resides in the nuclear pore complex. Its function is as follows. Required for the export of mRNAs containing poly(A) tails from the nucleus into the cytoplasm. May be involved in the terminal step of the mRNA transport through the nuclear pore complex (NPC). The sequence is that of mRNA export factor Gle1 from Drosophila melanogaster (Fruit fly).